A 128-amino-acid chain; its full sequence is Nanos homolog 1 (128 aa).

The segment at 7–23 is essential for its translational repressor activity; the sequence is FDSWSDYLGLSSLISRG. Residues 25-52 form a disordered region; sequence QPQREGERPRWDVLSPASAEPLPSNESV. A Nanos-type zinc finger spans residues 56–110; the sequence is GCGFCRSNREALSLYTSHRLRALDGRVLCPVLRGYTCPLCGANGDWAHTMRYCPL. Positions 57, 60, 73, 84, 92, 95, 103, and 108 each coordinate Zn(2+). Short sequence motifs (C2HC) lie at residues 57 to 84 and 92 to 108; these read CGFCRSNREALSLYTSHRLRALDGRVLC and CPLCGANGDWAHTMRYC.

The protein belongs to the nanos family. Interacts with ccnb1. Ovary and testis.

The protein localises to the cytoplasm. Its subcellular location is the perinuclear region. Its function is as follows. Acts as a translational repressor. Can mediate repression affecting different steps in the translation process: cap-driven, IRES-driven, polyadenylated RNAs or nonpolyadenylated RNAs. Essential for the development of primordial germ cells (PGCs) by ensuring their proper migration and survival. The protein is Nanos homolog 1 (nanos1) of Xenopus laevis (African clawed frog).